A 485-amino-acid polypeptide reads, in one-letter code: Adenosylhomocysteinase (485 aa).

Thr64, Asp139, and Glu205 together coordinate substrate. 206–208 (TTT) contributes to the NAD(+) binding site. Positions 235 and 239 each coordinate substrate. NAD(+) is bound by residues Asn240, 269–274 (GYGDVG), Glu292, Asn327, 348–350 (IGH), and Asn397.

Belongs to the adenosylhomocysteinase family. Requires NAD(+) as cofactor.

It carries out the reaction S-adenosyl-L-homocysteine + H2O = L-homocysteine + adenosine. Its pathway is amino-acid biosynthesis; L-homocysteine biosynthesis; L-homocysteine from S-adenosyl-L-homocysteine: step 1/1. Its function is as follows. Adenosylhomocysteine is a competitive inhibitor of S-adenosyl-L-methionine-dependent methyl transferase reactions; therefore adenosylhomocysteinase may play a key role in the control of methylations via regulation of the intracellular concentration of adenosylhomocysteine. This chain is Adenosylhomocysteinase (SAHH), found in Lupinus luteus (European yellow lupine).